The following is a 282-amino-acid chain: Phospholipid phosphatase 1 (282 aa).

Residues 1–6 (MFDKPR) are Cytoplasmic-facing. The short motif at 5–7 (PRL) is the PDZ-binding; involved in localization to the apical cell membrane element. Residues 7 to 27 (LPYVVLDVICVLLAGLPFIIL) traverse the membrane as a helical segment. Over 28-53 (TSRHTPFQRGVFCTDESIKYPYREDT) the chain is Extracellular. Residues 54–74 (IPYALLGGIVIPFCIIVMITG) traverse the membrane as a helical segment. Residues 75-88 (ETLSVYFNVLHSNS) lie on the Cytoplasmic side of the membrane. A helical transmembrane segment spans residues 89 to 109 (FVSNHYIATIYKAVGAFLFGA). Residues 110 to 164 (SASQSLTDIAKYSIGRLRPHFLAVCNPDWSKINCSDGYIENFVCQGNEQKVREGR) are Extracellular-facing. The segment at 120-128 (KYSIGRLRP) is phosphatase sequence motif I. The N-linked (GlcNAc...) asparagine glycan is linked to Asn142. A helical transmembrane segment spans residues 165–185 (LSFYSGHSSFSMYCMLFVALY). Residues 168–171 (YSGH) are phosphatase sequence motif II. His171 (proton donors) is an active-site residue. Topologically, residues 186–194 (LQARMKGDW) are cytoplasmic. The chain crosses the membrane as a helical span at residues 195 to 215 (ARLLRPMLQFGLVALSIYVGL). The segment at 216–227 (SRVSDYKHHWSD) is phosphatase sequence motif III. The Extracellular segment spans residues 216–229 (SRVSDYKHHWSDVL). Residue His223 is the Nucleophile of the active site. The helical transmembrane segment at 230 to 250 (IGLIQGAVVAILVVLYVTDFF) threads the bilayer. Residues 251-282 (KTTESNKERKEDSHTTLHETTNRQSYARNHEP) lie on the Cytoplasmic side of the membrane. The segment covering 257-271 (KERKEDSHTTLHETT) has biased composition (basic and acidic residues). The tract at residues 257-282 (KERKEDSHTTLHETTNRQSYARNHEP) is disordered. The segment covering 272 to 282 (NRQSYARNHEP) has biased composition (polar residues).

Belongs to the PA-phosphatase related phosphoesterase family. In terms of assembly, forms functional homodimers and homooligomers that are not required for substrate recognition and catalytic activity. Can also form heterooligomers with PLPP2 and PLPP3. In terms of processing, N-glycosylated. N-linked sugars are of the complex type. N-glycosylation is not required for the phosphatase activity.

Its subcellular location is the cell membrane. It is found in the apical cell membrane. The protein resides in the membrane raft. It localises to the membrane. The protein localises to the caveola. The enzyme catalyses a 1,2-diacyl-sn-glycero-3-phosphate + H2O = a 1,2-diacyl-sn-glycerol + phosphate. The catalysed reaction is 1,2-dihexadecanoyl-sn-glycero-3-phosphate + H2O = 1,2-dihexadecanoyl-sn-glycerol + phosphate. It carries out the reaction 1,2-di-(9Z-octadecenoyl)-sn-glycero-3-phosphate + H2O = 1,2-di-(9Z-octadecenoyl)-sn-glycerol + phosphate. It catalyses the reaction a monoacyl-sn-glycero-3-phosphate + H2O = a monoacylglycerol + phosphate. The enzyme catalyses (9Z)-octadecenoyl-sn-glycero-3-phosphate + H2O = (9Z-octadecenoyl)-glycerol + phosphate. The catalysed reaction is a 1-acyl-sn-glycero-3-phosphate + H2O = a 1-acyl-sn-glycerol + phosphate. It carries out the reaction 1-(9Z-octadecenoyl)-sn-glycero-3-phosphate + H2O = 1-(9Z-octadecenoyl)-sn-glycerol + phosphate. It catalyses the reaction a 1,2-diacyl-sn-glycerol 3-diphosphate + H2O = a 1,2-diacyl-sn-glycero-3-phosphate + phosphate + H(+). The enzyme catalyses sphing-4-enine 1-phosphate + H2O = sphing-4-enine + phosphate. The catalysed reaction is an N-acylsphing-4-enine 1-phosphate + H2O = an N-acylsphing-4-enine + phosphate. It carries out the reaction N-(octanoyl)-sphing-4-enine-1-phosphate + H2O = N-octanoylsphing-4-enine + phosphate. It catalyses the reaction N-(9Z-octadecenoyl)-ethanolamine phosphate + H2O = N-(9Z-octadecenoyl) ethanolamine + phosphate. The enzyme catalyses 1-hexadecanoyl-2-(9Z-octadecenoyl)-sn-glycero-3-phosphate + H2O = 1-hexadecanoyl-2-(9Z-octadecenoyl)-sn-glycerol + phosphate. Its pathway is lipid metabolism; phospholipid metabolism. Its activity is regulated as follows. Magnesium-independent phospholipid phosphatase. Insensitive to N-ethylmaleimide. Its function is as follows. Magnesium-independent phospholipid phosphatase of the plasma membrane that catalyzes the dephosphorylation of a variety of glycerolipid and sphingolipid phosphate esters including phosphatidate/PA, lysophosphatidate/LPA, diacylglycerol pyrophosphate/DGPP, sphingosine 1-phosphate/S1P and ceramide 1-phosphate/C1P. Also acts on N-oleoyl ethanolamine phosphate/N-(9Z-octadecenoyl)-ethanolamine phosphate, a potential physiological compound. Through its extracellular phosphatase activity allows both the hydrolysis and the cellular uptake of these bioactive lipid mediators from the milieu, regulating signal transduction in different cellular processes. It is for instance essential for the extracellular hydrolysis of S1P and subsequent conversion into intracellular S1P. Involved in the regulation of inflammation, platelets activation, cell proliferation and migration among other processes. May also have an intracellular activity to regulate phospholipid-mediated signaling pathways. This is Phospholipid phosphatase 1 from Rattus norvegicus (Rat).